The primary structure comprises 144 residues: D-aminoacyl-tRNA deacylase (144 aa).

The Gly-cisPro motif, important for rejection of L-amino acids signature appears at 136 to 137 (GP).

It belongs to the DTD family. Homodimer.

It is found in the cytoplasm. It carries out the reaction glycyl-tRNA(Ala) + H2O = tRNA(Ala) + glycine + H(+). The catalysed reaction is a D-aminoacyl-tRNA + H2O = a tRNA + a D-alpha-amino acid + H(+). Functionally, an aminoacyl-tRNA editing enzyme that deacylates mischarged D-aminoacyl-tRNAs. Also deacylates mischarged glycyl-tRNA(Ala), protecting cells against glycine mischarging by AlaRS. Acts via tRNA-based rather than protein-based catalysis; rejects L-amino acids rather than detecting D-amino acids in the active site. By recycling D-aminoacyl-tRNA to D-amino acids and free tRNA molecules, this enzyme counteracts the toxicity associated with the formation of D-aminoacyl-tRNA entities in vivo and helps enforce protein L-homochirality. In Glaesserella parasuis serovar 5 (strain SH0165) (Haemophilus parasuis), this protein is D-aminoacyl-tRNA deacylase.